We begin with the raw amino-acid sequence, 86 residues long: uncharacterized protein (86 aa).

This sequence to C.jejuni CJ0253.

This is an uncharacterized protein from Helicobacter pylori (strain J99 / ATCC 700824) (Campylobacter pylori J99).